Consider the following 314-residue polypeptide: MAEFNHVTVLLHEAVAGLAIQPAGVYVDATLGGGGHSGEILKQLTSGHLYSFDQDETAIHYNQANLGPAIEEGKLTLMQTNFRNLKQALADQGVTAIDGIVYDLGVSSPQFDDAKRGFSYQHDAPLDMRMNQDQPLSAYQVVNEWSYQELVRILYRYGEEKFAKQIARAIERARQKQPIQTTMELANIVKEAIPAAARRHGGHPAKKSFQAIRIAVNDELGALEDSLEQALALLKVGGRISVITFQSLEDRLVKTMFKEATSLPDLPPGLPVIPADAQPDFKLINKKPVLPTEDELKVNHRAHSAKLRVIERLK.

S-adenosyl-L-methionine contacts are provided by residues Gly34–His36, Asp53, Phe82, Asp103, and Gln110.

It belongs to the methyltransferase superfamily. RsmH family.

The protein resides in the cytoplasm. It catalyses the reaction cytidine(1402) in 16S rRNA + S-adenosyl-L-methionine = N(4)-methylcytidine(1402) in 16S rRNA + S-adenosyl-L-homocysteine + H(+). Specifically methylates the N4 position of cytidine in position 1402 (C1402) of 16S rRNA. The polypeptide is Ribosomal RNA small subunit methyltransferase H (Limosilactobacillus fermentum (strain NBRC 3956 / LMG 18251) (Lactobacillus fermentum)).